Here is a 126-residue protein sequence, read N- to C-terminus: Large ribosomal subunit protein uL22c (126 aa).

This sequence belongs to the universal ribosomal protein uL22 family. As to quaternary structure, part of the 50S ribosomal subunit.

Its subcellular location is the plastid. The protein localises to the chloroplast. Functionally, this protein binds specifically to 23S rRNA. Its function is as follows. The globular domain of the protein is located near the polypeptide exit tunnel on the outside of the subunit, while an extended beta-hairpin is found that lines the wall of the exit tunnel in the center of the 70S ribosome. The polypeptide is Large ribosomal subunit protein uL22c (rpl22) (Cryptomeria japonica (Japanese cedar)).